Reading from the N-terminus, the 263-residue chain is Indolethylamine N-methyltransferase (263 aa).

Lys13 bears the N6-succinyllysine mark. S-adenosyl-L-methionine is bound by residues Tyr20, Tyr25, 63–64 (GS), Tyr69, Asp85, and Asn90. Lys96 is subject to N6-succinyllysine. S-adenosyl-L-methionine contacts are provided by residues 142–143 (DV) and Leu163.

It belongs to the class I-like SAM-binding methyltransferase superfamily. NNMT/PNMT/TEMT family. Monomer.

The protein localises to the cytoplasm. It catalyses the reaction a tertiary amine + S-adenosyl-L-methionine = a methylated tertiary amine + S-adenosyl-L-homocysteine + H(+). The catalysed reaction is a secondary amine + S-adenosyl-L-methionine = a methylated secondary amine + S-adenosyl-L-homocysteine + H(+). It carries out the reaction a primary amine + S-adenosyl-L-methionine = a methylated primary amine + S-adenosyl-L-homocysteine + H(+). The enzyme catalyses dimethyl sulfide + S-adenosyl-L-methionine = trimethylsulfonium + S-adenosyl-L-homocysteine. In terms of biological role, catalyzes the N-methylation of tryptamine and structurally related compounds. Functions as a thioether S-methyltransferase and is active with a variety of thioethers and the corresponding selenium and tellurium compounds, including 3-methylthiopropionaldehyde, dimethyl selenide, dimethyl telluride, 2-methylthioethylamine, 2-methylthioethanol, methyl-n-propyl sulfide and diethyl sulfide. Plays an important role in the detoxification of selenium compounds. This chain is Indolethylamine N-methyltransferase (INMT), found in Pongo abelii (Sumatran orangutan).